The sequence spans 541 residues: Chaperonin GroEL (541 aa).

Residues 29-32 (TLGP), 86-90 (DGTTT), Gly413, and Asp495 each bind ATP.

This sequence belongs to the chaperonin (HSP60) family. In terms of assembly, forms a cylinder of 14 subunits composed of two heptameric rings stacked back-to-back. Interacts with the co-chaperonin GroES.

It localises to the cytoplasm. It carries out the reaction ATP + H2O + a folded polypeptide = ADP + phosphate + an unfolded polypeptide.. Functionally, together with its co-chaperonin GroES, plays an essential role in assisting protein folding. The GroEL-GroES system forms a nano-cage that allows encapsulation of the non-native substrate proteins and provides a physical environment optimized to promote and accelerate protein folding. The polypeptide is Chaperonin GroEL (Thermoanaerobacter pseudethanolicus (strain ATCC 33223 / 39E) (Clostridium thermohydrosulfuricum)).